The chain runs to 510 residues: MIYIIFSSIFAGFILGFLVRVFLGRLSLLDLEKNLTKVRVESQLEIENERKQIIANAKSQMLKEKNQQDRDIRDRKNEIVNLEKRLLQREETLDKRISALDKQQSRVDFKIKEFEQKEKAIREKEADLVKRLENISGLTREDARKIVIEKVEHESRRDAQVIINKSEQEAQLLADKVAKDILVSTMQRIVTEVSSEFTVASVELPNDEMKGRIIGKEGRNIRALETLIGADIIIDDTPEAVVISCFDPIRKELAKRTLERLVTDGRIHPARIEEVVYNVTNEINSIIQEEGEKVVFDLNIHGLDKRLIRGLGRLYFRSSYGQNVLSHSKETAIIGEILAKEMKLDPIVVKRACLLHDIGKGMESISENSEGHAITGAELAQSCGESEIVVNAIAAHHNEVKPESLEAIVVQIADAISASRPGARRESLNNYINRLKRLEDIAYSFEGVQKCYAIQAGREVRIIVDNVLVNDEKSILLARDIAKKIEAEMRYPGKIKVTIIRETRVIEYAR.

A helical membrane pass occupies residues 2 to 22; the sequence is IYIIFSSIFAGFILGFLVRVF. A KH domain is found at 198–258; sequence TVASVELPND…IRKELAKRTL (61 aa). Positions 324–419 constitute an HD domain; sequence VLSHSKETAI…VQIADAISAS (96 aa).

The protein belongs to the RNase Y family.

It localises to the cell membrane. Endoribonuclease that initiates mRNA decay. This Borrelia garinii subsp. bavariensis (strain ATCC BAA-2496 / DSM 23469 / PBi) (Borreliella bavariensis) protein is Ribonuclease Y.